Here is a 1129-residue protein sequence, read N- to C-terminus: Egg-laying defective protein 27 (1129 aa).

Polar residues predominate over residues 1–11 (MSRFDSQCSSE). The disordered stretch occupies residues 1-43 (MSRFDSQCSSEDVNKEDECVPSSSEDSQDGVSSPMENDDEPEF). Positions 22–33 (SSSEDSQDGVSS) are enriched in low complexity. The 137-residue stretch at 87 to 223 (TLYRLRDSVF…QDSTKLASTH (137 aa)) folds into the BAH domain. The region spanning 224–327 (YAIRVGTSFQ…DALSELNAND (104 aa)) is the ELM2 domain. Residues 332-384 (TDVDNMTQDDAKKFAKGIKQLGKNFSRIHRELLPHHSREQLVSYYYLWKKTPE) enclose the SANT domain. Residues 388–434 (PKQAARRVNPTSIKRPTKEKVKASRPTSTEYLDFDSASESDVENNGP) are disordered. Residues 419-429 (LDFDSASESDV) show a composition bias toward acidic residues. The segment at 439 to 485 (CHHCYGAESKDWHHANGLLLCTDCRLHYKKYGQLRQIANRPSQVPAC) adopts a GATA-type; atypical zinc-finger fold. 5 disordered regions span residues 488-636 (KRSN…DPMP), 693-717 (RDETNGETNSDLKDDENVEPDSPED), 790-814 (QQNQIKKEQQQSQPTPQQIHQQQAQ), 899-950 (MIAE…HAAA), and 982-1040 (MAAQ…REHA). 2 stretches are compositionally biased toward polar residues: residues 525-545 (PSTVSNGAPNLTAEETPTKKL) and 561-573 (VINNVEKSNSSEE). Composition is skewed to acidic residues over residues 613-634 (SYDDDDDEEEGKMTIDEGDDDP) and 705-717 (KDDENVEPDSPED). Residues 899–914 (MIAEQQQQQRHAAAQQ) are compositionally biased toward low complexity. Residues 915-932 (LREREQREQRERERERQH) are compositionally biased toward basic and acidic residues. Low complexity-rich tracts occupy residues 933–950 (QQQAQQALHQQQQQHAAA) and 983–999 (AAQQQQQQQQAAQAQAQ). Residues 1000-1040 (RDQERERREREAREREAAREREREQAAREAAARDQAAREHA) are compositionally biased toward basic and acidic residues.

Interacts with ceh-6, sem-4 and sox-2. Interacts with wdr-5.1. In terms of tissue distribution, expression detected in anterior intestine and head region.

The protein resides in the nucleus. In terms of biological role, transcription factor which promotes stress survival and delays aging. Required for cell cycle progression and development of the mesodermal and endodermal embryonic lineages. Required for normal T-cell polarity, for correct migration of QL neuroblast descendants and other cells, for embryonic patterning and for the embryonic expression of hlh-8. Also required for the transdifferentiation of the Y rectal epithelial cell to the PDA motor neuron during larval development. The polypeptide is Egg-laying defective protein 27 (Caenorhabditis elegans).